The sequence spans 222 residues: MPKQVKGLLGEKLGMTQVFDESGRVIPVTVVRAGPCVVTQVRTPDRDGYSAVQLGYGAVDPRRVNKPLAGHFRAAGVTPRRYLAEVRTGDAAEYTVGQEVTVEIFTPGQRVDVAGVSKGKGFAGLMKRHNFRGLPDSHGTERKHRSPGSIGACATPGRVFKGLRMAGRMGGRRVTVQNLAVQAVKPEENLLLLQGAVPGPNGGLVYVRTAAKGKANRDGGAA.

The segment at 129-150 (HNFRGLPDSHGTERKHRSPGSI) is disordered.

The protein belongs to the universal ribosomal protein uL3 family. As to quaternary structure, part of the 50S ribosomal subunit. Forms a cluster with proteins L14 and L19.

Its function is as follows. One of the primary rRNA binding proteins, it binds directly near the 3'-end of the 23S rRNA, where it nucleates assembly of the 50S subunit. This is Large ribosomal subunit protein uL3 from Acidothermus cellulolyticus (strain ATCC 43068 / DSM 8971 / 11B).